The following is a 297-amino-acid chain: Probable DNA polymerase III subunit delta (297 aa).

It belongs to the DNA polymerase HolA subunit family. As to quaternary structure, component of the DNA clamp loading complex consisting of tau(3):delta(1):delta'(1). The DNA polymerase III holoenzyme complex contains at least 10 different subunits organized into 3 functionally essential subassemblies: the Pol III core, the beta sliding clamp processivity factor and the clamp-loading complex. The Pol III core (subunits alpha, epsilon and theta) contains the polymerase and the 3'-5' exonuclease proofreading activities. The polymerase is tethered to the template via the dimeric beta sliding clamp processivity factor. The DNA clamp-loading complex assembles the beta sliding clamp onto the primed template and plays a central role in the organization and communication at the replication fork.

It catalyses the reaction DNA(n) + a 2'-deoxyribonucleoside 5'-triphosphate = DNA(n+1) + diphosphate. Functionally, part of the beta sliding clamp loading complex, which hydrolyzes ATP to load the beta clamp onto primed DNA to form the DNA replication pre-initiation complex. DNA polymerase III is a complex, multichain enzyme responsible for most of the replicative synthesis in bacteria. This DNA polymerase also exhibits 3'-5' exonuclease activity. The delta subunit is the wrench that will open the beta subunit dimer. The DNA clamp loading complex (tau(3),delta,delta') is thought to load beta dimers onto DNA by binding ATP which alters the complex's conformation so it can bind beta sliding clamp dimers and open them at one interface. Primed DNA is recognized, ATP is hydrolyzed releasing the clamp loading complex and closing the beta sliding clamp ring around the primed DNA. The protein is Probable DNA polymerase III subunit delta of Mycoplasma genitalium (strain ATCC 33530 / DSM 19775 / NCTC 10195 / G37) (Mycoplasmoides genitalium).